The sequence spans 787 residues: DNA ligase (787 aa).

Residues 32-36 (DAEYD), 81-82 (SL), and Glu-121 contribute to the NAD(+) site. The active-site N6-AMP-lysine intermediate is Lys-123. Residues Arg-144, Glu-181, Lys-297, and Lys-321 each contribute to the NAD(+) site. Residues Cys-415, Cys-418, Cys-445, and Cys-451 each contribute to the Zn(2+) site. In terms of domain architecture, BRCT spans 703–787 (VEGLPLAGQT…RLTELGVAVD (85 aa)).

It belongs to the NAD-dependent DNA ligase family. LigA subfamily. The cofactor is Mg(2+). Mn(2+) serves as cofactor.

The catalysed reaction is NAD(+) + (deoxyribonucleotide)n-3'-hydroxyl + 5'-phospho-(deoxyribonucleotide)m = (deoxyribonucleotide)n+m + AMP + beta-nicotinamide D-nucleotide.. Functionally, DNA ligase that catalyzes the formation of phosphodiester linkages between 5'-phosphoryl and 3'-hydroxyl groups in double-stranded DNA using NAD as a coenzyme and as the energy source for the reaction. It is essential for DNA replication and repair of damaged DNA. The chain is DNA ligase from Pseudomonas syringae pv. tomato (strain ATCC BAA-871 / DC3000).